The sequence spans 117 residues: Large ribosomal subunit protein bL20 (117 aa).

The protein belongs to the bacterial ribosomal protein bL20 family.

Binds directly to 23S ribosomal RNA and is necessary for the in vitro assembly process of the 50S ribosomal subunit. It is not involved in the protein synthesizing functions of that subunit. In Actinobacillus succinogenes (strain ATCC 55618 / DSM 22257 / CCUG 43843 / 130Z), this protein is Large ribosomal subunit protein bL20.